The primary structure comprises 397 residues: 3-ketoacyl-CoA thiolase, mitochondrial (397 aa).

Residues 1-16 (MALLRGVFIVAAKRTP) constitute a mitochondrion; not cleaved transit peptide. The residue at position 25 (lysine 25) is an N6-acetyllysine; alternate. Position 25 is an N6-succinyllysine; alternate (lysine 25). Serine 28 carries the phosphoserine modification. Lysine 45 carries the post-translational modification N6-succinyllysine. The active-site Acyl-thioester intermediate is cysteine 92. At threonine 119 the chain carries Phosphothreonine. The residue at position 121 (serine 121) is a Phosphoserine. The residue at position 127 (tyrosine 127) is a Phosphotyrosine. Threonine 136 bears the Phosphothreonine mark. 6 positions are modified to N6-acetyllysine; alternate: lysine 137, lysine 143, lysine 158, lysine 171, lysine 191, and lysine 209. 6 positions are modified to N6-succinyllysine; alternate: lysine 137, lysine 143, lysine 158, lysine 171, lysine 191, and lysine 209. An N6-succinyllysine mark is found at lysine 211, lysine 212, and lysine 214. CoA-binding residues include arginine 224 and threonine 227. Lysine 234 is subject to N6-acetyllysine; alternate. Lysine 234 is subject to N6-succinyllysine; alternate. Lysine 240 is modified (N6-succinyllysine). An N6-acetyllysine modification is found at lysine 241. Serine 251 is a CoA binding site. Residues lysine 269 and lysine 270 each carry the N6-acetyllysine modification. Lysine 305 is modified (N6-acetyllysine; alternate). The residue at position 305 (lysine 305) is an N6-succinyllysine; alternate. Serine 310 bears the Phosphoserine mark. The residue at position 312 (lysine 312) is an N6-acetyllysine; alternate. Lysine 312 is modified (N6-succinyllysine; alternate). An N6-acetyllysine modification is found at lysine 340. Serine 344 bears the Phosphoserine mark. Residue lysine 375 is modified to N6-acetyllysine. The Proton donor/acceptor role is filled by cysteine 382.

It belongs to the thiolase-like superfamily. Thiolase family. As to quaternary structure, homotetramer. Interacts with BNIP3.

The protein localises to the mitochondrion. It carries out the reaction an acyl-CoA + acetyl-CoA = a 3-oxoacyl-CoA + CoA. The enzyme catalyses 2 acetyl-CoA = acetoacetyl-CoA + CoA. The catalysed reaction is acetyl-CoA + H2O = acetate + CoA + H(+). It catalyses the reaction propanoyl-CoA + H2O = propanoate + CoA + H(+). It carries out the reaction butanoyl-CoA + H2O = butanoate + CoA + H(+). The enzyme catalyses hexanoyl-CoA + H2O = hexanoate + CoA + H(+). The catalysed reaction is octanoyl-CoA + H2O = octanoate + CoA + H(+). It catalyses the reaction decanoyl-CoA + H2O = decanoate + CoA + H(+). It carries out the reaction dodecanoyl-CoA + H2O = dodecanoate + CoA + H(+). The enzyme catalyses tetradecanoyl-CoA + H2O = tetradecanoate + CoA + H(+). The catalysed reaction is hexadecanoyl-CoA + H2O = hexadecanoate + CoA + H(+). The protein operates within lipid metabolism; fatty acid beta-oxidation. In terms of biological role, in the production of energy from fats, this is one of the enzymes that catalyzes the last step of the mitochondrial beta-oxidation pathway, an aerobic process breaking down fatty acids into acetyl-CoA. Using free coenzyme A/CoA, catalyzes the thiolytic cleavage of medium- to long-chain unbranched 3-oxoacyl-CoAs into acetyl-CoA and a fatty acyl-CoA shortened by two carbon atoms. Also catalyzes the condensation of two acetyl-CoA molecules into acetoacetyl-CoA and could be involved in the production of ketone bodies. Also displays hydrolase activity on various fatty acyl-CoAs. Thereby, could be responsible for the production of acetate in a side reaction to beta-oxidation. Abolishes BNIP3-mediated apoptosis and mitochondrial damage. This chain is 3-ketoacyl-CoA thiolase, mitochondrial (Acaa2), found in Mus musculus (Mouse).